The following is a 230-amino-acid chain: MADS-box transcription factor 50 (230 aa).

The 61-residue stretch at 1–61 (MVRGKTQMKR…GKLYEFASAS (61 aa)) folds into the MADS-box domain. A K-box domain is found at 86–176 (IEQVKADADG…REKCKNQPPL (91 aa)). The tract at residues 209-230 (GLPGRSRSSGGAAEDSQAMPHS) is disordered.

As to expression, expressed in mature leaves and at low levels in roots and young panicles.

Its subcellular location is the nucleus. Probable transcription factor active in flowering time control. May control internode elongation and promote floral transition phase. May act upstream of the floral regulators MADS1, MADS14, MADS15 and MADS18 in the floral induction pathway. The sequence is that of MADS-box transcription factor 50 (MADS50) from Oryza sativa subsp. japonica (Rice).